A 247-amino-acid chain; its full sequence is Carboxy-S-adenosyl-L-methionine synthase (247 aa).

Residues Tyr40, 65-67 (GAS), 90-91 (DN), 122-123 (DI), Asn137, and Arg204 each bind S-adenosyl-L-methionine.

It belongs to the class I-like SAM-binding methyltransferase superfamily. Cx-SAM synthase family. Homodimer.

The enzyme catalyses prephenate + S-adenosyl-L-methionine = carboxy-S-adenosyl-L-methionine + 3-phenylpyruvate + H2O. Functionally, catalyzes the conversion of S-adenosyl-L-methionine (SAM) to carboxy-S-adenosyl-L-methionine (Cx-SAM). This is Carboxy-S-adenosyl-L-methionine synthase from Pseudomonas putida (strain ATCC 47054 / DSM 6125 / CFBP 8728 / NCIMB 11950 / KT2440).